The primary structure comprises 569 residues: Proline--tRNA ligase (569 aa).

This sequence belongs to the class-II aminoacyl-tRNA synthetase family. ProS type 1 subfamily. As to quaternary structure, homodimer.

It is found in the cytoplasm. The enzyme catalyses tRNA(Pro) + L-proline + ATP = L-prolyl-tRNA(Pro) + AMP + diphosphate. Its function is as follows. Catalyzes the attachment of proline to tRNA(Pro) in a two-step reaction: proline is first activated by ATP to form Pro-AMP and then transferred to the acceptor end of tRNA(Pro). As ProRS can inadvertently accommodate and process non-cognate amino acids such as alanine and cysteine, to avoid such errors it has two additional distinct editing activities against alanine. One activity is designated as 'pretransfer' editing and involves the tRNA(Pro)-independent hydrolysis of activated Ala-AMP. The other activity is designated 'posttransfer' editing and involves deacylation of mischarged Ala-tRNA(Pro). The misacylated Cys-tRNA(Pro) is not edited by ProRS. The protein is Proline--tRNA ligase of Legionella pneumophila (strain Paris).